Reading from the N-terminus, the 219-residue chain is Protein-L-isoaspartate O-methyltransferase (219 aa).

The active site involves S64.

Belongs to the methyltransferase superfamily. L-isoaspartyl/D-aspartyl protein methyltransferase family.

It localises to the cytoplasm. It catalyses the reaction [protein]-L-isoaspartate + S-adenosyl-L-methionine = [protein]-L-isoaspartate alpha-methyl ester + S-adenosyl-L-homocysteine. In terms of biological role, catalyzes the methyl esterification of L-isoaspartyl residues in peptides and proteins that result from spontaneous decomposition of normal L-aspartyl and L-asparaginyl residues. It plays a role in the repair and/or degradation of damaged proteins. This Chlorobaculum parvum (strain DSM 263 / NCIMB 8327) (Chlorobium vibrioforme subsp. thiosulfatophilum) protein is Protein-L-isoaspartate O-methyltransferase.